A 389-amino-acid chain; its full sequence is S-adenosylmethionine synthase (389 aa).

Residue His-19 coordinates ATP. Asp-21 is a Mg(2+) binding site. K(+) is bound at residue Glu-47. Residues Glu-60 and Gln-103 each coordinate L-methionine. Positions 103–113 are flexible loop; it reads QSVDIAQGVSR. ATP contacts are provided by residues 168–170, 234–235, Asp-243, 249–250, Ala-266, and Lys-270; these read DGK, RF, and RK. Asp-243 is an L-methionine binding site. Position 274 (Lys-274) interacts with L-methionine.

It belongs to the AdoMet synthase family. As to quaternary structure, homotetramer; dimer of dimers. Requires Mg(2+) as cofactor. The cofactor is K(+).

Its subcellular location is the cytoplasm. The catalysed reaction is L-methionine + ATP + H2O = S-adenosyl-L-methionine + phosphate + diphosphate. Its pathway is amino-acid biosynthesis; S-adenosyl-L-methionine biosynthesis; S-adenosyl-L-methionine from L-methionine: step 1/1. In terms of biological role, catalyzes the formation of S-adenosylmethionine (AdoMet) from methionine and ATP. The overall synthetic reaction is composed of two sequential steps, AdoMet formation and the subsequent tripolyphosphate hydrolysis which occurs prior to release of AdoMet from the enzyme. In Solidesulfovibrio magneticus (strain ATCC 700980 / DSM 13731 / RS-1) (Desulfovibrio magneticus), this protein is S-adenosylmethionine synthase.